Here is a 298-residue protein sequence, read N- to C-terminus: 4-hydroxy-tetrahydrodipicolinate synthase (298 aa).

Residue threonine 51 participates in pyruvate binding. Tyrosine 139 (proton donor/acceptor) is an active-site residue. The active-site Schiff-base intermediate with substrate is the lysine 167. Residue isoleucine 209 coordinates pyruvate.

The protein belongs to the DapA family. Homotetramer; dimer of dimers.

The protein resides in the cytoplasm. It carries out the reaction L-aspartate 4-semialdehyde + pyruvate = (2S,4S)-4-hydroxy-2,3,4,5-tetrahydrodipicolinate + H2O + H(+). Its pathway is amino-acid biosynthesis; L-lysine biosynthesis via DAP pathway; (S)-tetrahydrodipicolinate from L-aspartate: step 3/4. Catalyzes the condensation of (S)-aspartate-beta-semialdehyde [(S)-ASA] and pyruvate to 4-hydroxy-tetrahydrodipicolinate (HTPA). The sequence is that of 4-hydroxy-tetrahydrodipicolinate synthase from Haemophilus influenzae (strain ATCC 51907 / DSM 11121 / KW20 / Rd).